Consider the following 69-residue polypeptide: Pleurain-A3 (69 aa).

The signal sequence occupies residues 1-22 (MFTLKKTLLLLFFLGTISISLC). Positions 23–43 (KQARDADEDDGRKMTEEEVKR) are excised as a propeptide. Cysteines 63 and 69 form a disulfide.

Belongs to the frog skin active peptide (FSAP) family. Pleurain subfamily. In terms of tissue distribution, expressed by the skin glands.

The protein resides in the secreted. Its function is as follows. Antimicrobial peptide. Has activity against Gram-positive and -negative bacteria, and fungi. Has little hemolytic activity on red blood cells. The polypeptide is Pleurain-A3 (Nidirana pleuraden (Yunnan pond frog)).